We begin with the raw amino-acid sequence, 60 residues long: uncharacterized protein (60 aa).

This is an uncharacterized protein from Saccharomyces cerevisiae (strain ATCC 204508 / S288c) (Baker's yeast).